Here is a 289-residue protein sequence, read N- to C-terminus: F-actin-capping protein subunit beta (289 aa).

The disordered stretch occupies residues 73–110 (RSPWSNQFDPPLEGGNQGGSGGDGEGDGGEGGAAGSIM). Gly residues predominate over residues 87-106 (GNQGGSGGDGEGDGGEGGAA).

Belongs to the F-actin-capping protein beta subunit family. Component of the F-actin capping complex, composed of a heterodimer of an alpha and a beta subunit.

The protein localises to the cytoplasm. It localises to the cytoskeleton. It is found in the actin patch. F-actin-capping proteins bind in a Ca(2+)-independent manner to the fast growing ends of actin filaments (barbed end) thereby blocking the exchange of subunits at these ends. Unlike other capping proteins (such as gelsolin and severin), these proteins do not sever actin filaments. This is F-actin-capping protein subunit beta (fac-2) from Neurospora crassa (strain ATCC 24698 / 74-OR23-1A / CBS 708.71 / DSM 1257 / FGSC 987).